Reading from the N-terminus, the 254-residue chain is MRILLSNDDGVTAPGIQTLAAALREFAQVQVVAPNRNRSGSSNALTLESPLRSETLANGDISVIDGTPTDCVYLGVNALMRPRPDIVIAGINAGPNLGDDVIYSGTVAAAMEGRHLGFPALAVSLDGERHYDTAAAVTCRLLRMLSDAPLRSGRILNVNVPDVPLTAIRGWRVTRCGSRHPAQTVIHQQDPRGKPLMWIGPPGAKQDAGEETDFAAVAAGYISVTPLQVDLTAHGARGRLAEWLGRVDKGGAAW.

Residues D8, D9, S39, and N92 each contribute to the a divalent metal cation site.

The protein belongs to the SurE nucleotidase family. The cofactor is a divalent metal cation.

Its subcellular location is the cytoplasm. It carries out the reaction a ribonucleoside 5'-phosphate + H2O = a ribonucleoside + phosphate. The enzyme catalyses a ribonucleoside 3'-phosphate + H2O = a ribonucleoside + phosphate. The catalysed reaction is [phosphate](n) + H2O = [phosphate](n-1) + phosphate + H(+). Its function is as follows. Nucleotidase with a broad substrate specificity as it can dephosphorylate various ribo- and deoxyribonucleoside 5'-monophosphates and ribonucleoside 3'-monophosphates with highest affinity to 3'-AMP. Also hydrolyzes polyphosphate (exopolyphosphatase activity) with the preference for short-chain-length substrates (P20-25). Might be involved in the regulation of dNTP and NTP pools, and in the turnover of 3'-mononucleotides produced by numerous intracellular RNases (T1, T2, and F) during the degradation of various RNAs. This chain is 5'/3'-nucleotidase SurE, found in Edwardsiella ictaluri (strain 93-146).